The chain runs to 287 residues: Probable aquaporin PIP1-5 (287 aa).

The residue at position 1 (methionine 1) is an N-acetylmethionine. The tract at residues 1–34 is disordered; it reads MEGKEEDVNVGANKFPERQPIGTAAQTESKDYKE. Topologically, residues 1-55 are cytoplasmic; sequence MEGKEEDVNVGANKFPERQPIGTAAQTESKDYKEPPPAPFFEPGELKSWSFYRAG. The helical transmembrane segment at 56–76 threads the bilayer; sequence IAEFIATFLFLYVTVLTVMGV. The Extracellular portion of the chain corresponds to 77-92; sequence KRAPNMCASVGIQGIA. The helical transmembrane segment at 93-113 threads the bilayer; sequence WAFGGMIFALVYCTAGISGGH. Residues 114–133 lie on the Cytoplasmic side of the membrane; the sequence is INPAVTFGLFLARKLSLTRA. Residues 115 to 117 carry the NPA 1 motif; it reads NPA. Residues 134–154 traverse the membrane as a helical segment; the sequence is LFYIVMQCLGAICGAGVVKGF. Over 155–175 the chain is Extracellular; that stretch reads QPGLYQTNGGGANVVAHGYTK. The chain crosses the membrane as a helical span at residues 176-196; sequence GSGLGAEIVGTFVLVYTVFSA. Over 197 to 209 the chain is Cytoplasmic; sequence TDAKRSARDSHVP. The chain crosses the membrane as a helical span at residues 210 to 230; that stretch reads ILAPLPIGFAVFLVHLATIPI. Topologically, residues 231–257 are extracellular; sequence TGTGINPARSLGAAIIYNKDHAWDDHW. The NPA 2 motif lies at 236-238; sequence NPA. The helical transmembrane segment at 258-278 threads the bilayer; sequence IFWVGPFIGAALAALYHQIVI. Over 279-287 the chain is Cytoplasmic; it reads RAIPFKSKT. Residue serine 285 is modified to Phosphoserine.

The protein belongs to the MIP/aquaporin (TC 1.A.8) family. PIP (TC 1.A.8.11) subfamily. In terms of tissue distribution, predominantly expressed in green siliques. Also expressed above ground, in roots and flower buds.

The protein resides in the cell membrane. Its function is as follows. Aquaporins facilitate the transport of water and small neutral solutes across cell membranes. This Arabidopsis thaliana (Mouse-ear cress) protein is Probable aquaporin PIP1-5 (PIP1-5).